We begin with the raw amino-acid sequence, 124 residues long: Large ribosomal subunit protein uL22 (124 aa).

It belongs to the universal ribosomal protein uL22 family. Part of the 50S ribosomal subunit.

Functionally, this protein binds specifically to 23S rRNA; its binding is stimulated by other ribosomal proteins, e.g. L4, L17, and L20. It is important during the early stages of 50S assembly. It makes multiple contacts with different domains of the 23S rRNA in the assembled 50S subunit and ribosome. In terms of biological role, the globular domain of the protein is located near the polypeptide exit tunnel on the outside of the subunit, while an extended beta-hairpin is found that lines the wall of the exit tunnel in the center of the 70S ribosome. The sequence is that of Large ribosomal subunit protein uL22 from Treponema pallidum (strain Nichols).